Consider the following 953-residue polypeptide: Zinc finger CCCH domain-containing protein 18 (953 aa).

The residue at position 1 (Met1) is an N-acetylmethionine. Over residues 1 to 14 (MDVAESPERDPHSP) the composition is skewed to basic and acidic residues. 2 disordered regions span residues 1–222 (MDVA…RPRP) and 391–928 (QYTE…LSRR). Residue Ser6 is modified to Phosphoserine. A compositionally biased stretch (acidic residues) spans 15–26 (EDEEQPQGLSDD). Ser34, Ser46, Ser53, Ser59, Ser67, Ser74, Ser78, Ser83, and Ser95 each carry phosphoserine. Residues 60-72 (QEEEDNHSDEEDR) show a composition bias toward acidic residues. Residues 97–106 (CEEEGDEGEE) show a composition bias toward acidic residues. Positions 105–134 (EEDRTSDLRDEASSVTRELDEHELDYDEEV) form a coiled coil. Residues 107 to 124 (DRTSDLRDEASSVTRELD) show a composition bias toward basic and acidic residues. Thr109 carries the post-translational modification Phosphothreonine. Ser110 and Ser118 each carry phosphoserine. 2 stretches are compositionally biased toward acidic residues: residues 125 to 136 (EHELDYDEEVPE) and 143 to 158 (QEDEAEKAGAEDDEEK). Positions 159 to 168 (GEGTPREEGK) are enriched in basic and acidic residues. Phosphothreonine is present on Thr162. Ser173 and Ser179 each carry phosphoserine. Residues 175–190 (GEKESLEAAKEKKKED) are compositionally biased toward basic and acidic residues. Acidic residues predominate over residues 191-207 (DDGEIDDGEIDDDDLEE). A compositionally biased stretch (basic and acidic residues) spans 208–217 (GEVKDPSDRK). The segment at 219-245 (RPRPTCRFFMKGNCTWGMNCRFIHPGV) adopts a C3H1-type zinc-finger fold. Basic and acidic residues predominate over residues 396-482 (EPYHNYRERE…EKEREKEKGK (87 aa)). Residues 399-464 (HNYRERERER…RERAKRDEKD (66 aa)) are a coiled coil. Ser487 carries the phosphoserine modification. Lys510 is covalently cross-linked (Glycyl lysine isopeptide (Lys-Gly) (interchain with G-Cter in SUMO2)). The segment covering 510–520 (KRADEWKDPWR) has biased composition (basic and acidic residues). 3 positions are modified to phosphoserine: Ser532, Ser534, and Ser536. A compositionally biased stretch (low complexity) spans 545 to 606 (SASSASASNS…SRSRSFSSSP (62 aa)). Residues Lys622 and Lys661 each participate in a glycyl lysine isopeptide (Lys-Gly) (interchain with G-Cter in SUMO2) cross-link. Basic and acidic residues predominate over residues 661-670 (KPGDPREARR). Low complexity-rich tracts occupy residues 692–725 (GSSYSGSSSRSRSLSVSSVSSVSSATSSSSSAHS) and 736–750 (ASPVSSASSRSPAPA). Basic and acidic residues predominate over residues 760–774 (KKEDGVKEEKRKRDS). A Glycyl lysine isopeptide (Lys-Gly) (interchain with G-Cter in SUMO2) cross-link involves residue Lys766. Low complexity predominate over residues 778 to 798 (PPKSAKPPAGGKSSQQPSTPQ). N6-acetyllysine is present on Lys814. Lys817 participates in a covalent cross-link: Glycyl lysine isopeptide (Lys-Gly) (interchain with G-Cter in SUMO2). Residues 824–841 (AADKGSRKRYEPSDKDRQ) are compositionally biased toward basic and acidic residues. Residues Ser842, Ser852, Ser868, Ser893, and Ser896 each carry the phosphoserine modification. Residues 893–906 (SPQSKSSSKVTSVP) are compositionally biased toward low complexity. Lys908 is covalently cross-linked (Glycyl lysine isopeptide (Lys-Gly) (interchain with G-Cter in SUMO2)). The segment covering 916-925 (STKSGKASTL) has biased composition (polar residues). Positions 921–950 (KASTLSRREELLKQLKAVEDAIARKRAKIP) form a coiled coil.

In terms of assembly, interacts with ZFC3H1 in a RNase-insensitive manner.

The protein localises to the nucleus. The chain is Zinc finger CCCH domain-containing protein 18 from Homo sapiens (Human).